The primary structure comprises 1356 residues: Tenascin-R (1356 aa).

The N-terminal stretch at 1 to 31 (MGIEGETVVLKNMLIGVNLILLGSMLKPSEC) is a signal peptide. Asparagine 55 is a glycosylation site (N-linked (GlcNAc...) asparagine). A coiled-coil region spans residues 127-157 (CASSAQVLQELLSRIEMLEREVSVLRDQCNT). Serine 176 carries an O-linked (Xyl...) (chondroitin sulfate) serine glycan. N-linked (GlcNAc...) asparagine glycosylation is found at asparagine 180 and asparagine 198. 3 EGF-like domains span residues 188-199 (CICNEGWFGKNC), 204-230 (CPLG…GDDC), and 235-261 (CPTD…GEDC). An O-linked (Xyl...) (chondroitin sulfate) serine glycan is attached at serine 271. The N-linked (GlcNAc...) asparagine glycan is linked to asparagine 278. EGF-like domains follow at residues 281 to 292 (CLCQEGYAGEDC) and 293 to 324 (SQRR…PDCS). Disulfide bonds link cysteine 297–cysteine 307 and cysteine 314–cysteine 323. An O-linked (Xyl...) (chondroitin sulfate) serine glycan is attached at serine 302. 9 Fibronectin type-III domains span residues 328–419 (PPED…TPQG), 420–504 (LQFK…TVID), 505–596 (GPTQ…IDAP), 597–686 (KNLR…TELD), 687–776 (SPRD…FRPI), 777–864 (SHLH…TGID), 865–953 (PPKN…AMDS), 954–1040 (PMDL…TLLD), and 1041–1129 (PPAN…GGRV). N-linked (GlcNAc...) asparagine glycans are attached at residues asparagine 391, asparagine 469, and asparagine 580. Serine 723 carries the phosphoserine modification. N-linked (GlcNAc...) asparagine glycans are attached at residues asparagine 790, asparagine 868, asparagine 873, asparagine 1034, asparagine 1044, and asparagine 1259. Positions 1127 to 1342 (GRVFSHPQDC…FVEMKMRPYI (216 aa)) constitute a Fibrinogen C-terminal domain.

This sequence belongs to the tenascin family. As to quaternary structure, forms oligomers. Interacts with TNC and FN1. Interacts with BCAN and ACAN in a calcium -dependent manner. Interacts with CNTN1, SCN2B, PTPRZ1, and CSPG3. Contains N-linked oligosaccharides, O-linked sialylated structures. Contains O-linked chondroitin sulfate glycosaminoglycans. Contains N-linked oligosaccharides with a sulfated carbohydrate structure type GalNAc-4-SO4 or HNK-1 (SO4-3-GlcUABeta1,3GalBeta1,4GlcNAc). The levels of HNK-1 rise and fall in parallel to those of TNR during postnatal development of the cerebellum. In contrast, levels of GalNAc-4-SO4 are regulated independently from those of TNR, rising late in cerebellar development and continuing into adulthood. Early in postnatal development, GalNAc-4-SO4 is found predominantly on isoform 1, whereas in the adult it is predominantly on isoform 2. In terms of tissue distribution, brain-specific. Expressed in oligodendrocytes and small subsets of neurons (mainly interneurons and motoneurons) of the cerebellum, hippocampus and olfactory bulb. Expressed in dorsal root ganglia.

The protein localises to the secreted. It localises to the extracellular space. Its subcellular location is the extracellular matrix. In terms of biological role, neural extracellular matrix (ECM) protein involved in interactions with different cells and matrix components. Theses interactions can influence cellular behavior by either evoking a stable adhesion and differentiation, or repulsion and inhibition of neurite growth. Binding to cell surface gangliosides inhibits RGD-dependent integrin-mediated cell adhesion and results in an inhibition of PTK2/FAK1 (FAK) phosphorylation and cell detachment. Binding to membrane surface sulfatides results in a oligodendrocyte adhesion and differentiation. Interaction with CNTN1 induces a repulsion of neurons and an inhibition of neurite outgrowth. Interacts with SCN2B may play a crucial role in clustering and regulation of activity of sodium channels at nodes of Ranvier. TNR-linked chondroitin sulfate glycosaminoglycans are involved in the interaction with FN1 and mediates inhibition of cell adhesion and neurite outgrowth. The highly regulated addition of sulfated carbohydrate structure may modulate the adhesive properties of TNR over the course of development and during synapse maintenance. The sequence is that of Tenascin-R (Tnr) from Rattus norvegicus (Rat).